A 918-amino-acid polypeptide reads, in one-letter code: Eukaryotic translation initiation factor 3 subunit C (918 aa).

Residues 1 to 174 (MSRFFKGGSS…EEEGRRVVKS (174 aa)) form a disordered region. Phosphoserine is present on residues S10, S12, S16, S19, and S20. Acidic residues-rich tracts occupy residues 36–47 (SSSEEESSEEES), 54–67 (ESSE…ESEV), and 79–128 (EDSE…ESDE). T667 carries the phosphothreonine modification. In terms of domain architecture, PCI spans 681-856 (FHMHINLELL…GAIIFERVEI (176 aa)). Residues 879-918 (KLYEQKTQHTNPQENRRRDKGGSVKRRNERTENRNRSDMN) form a disordered region. Residues 907–918 (ERTENRNRSDMN) are compositionally biased toward basic and acidic residues.

It belongs to the eIF-3 subunit C family. Component of the eukaryotic translation initiation factor 3 (eIF-3) complex. The eIF-3 complex appears to include tif32/eif3a, SPAC25G10.08/eif3b, tif33/eif3c, SPBC4C3.07/eif3f, tif35/eif3g and sum1/eif3i. This set of common subunits may also associate exclusively with either moe1/eif3d and int6/eif3e, or with SPAC821.05/eif3h and SPAC1751.03/eif3m. The eIF-3 complex may also include SPAC3A12.13c/eif3j.

Its subcellular location is the cytoplasm. Functionally, component of the eukaryotic translation initiation factor 3 (eIF-3) complex, which is involved in protein synthesis of a specialized repertoire of mRNAs and, together with other initiation factors, stimulates binding of mRNA and methionyl-tRNAi to the 40S ribosome. The eIF-3 complex specifically targets and initiates translation of a subset of mRNAs involved in cell proliferation. The chain is Eukaryotic translation initiation factor 3 subunit C (nip1) from Schizosaccharomyces pombe (strain 972 / ATCC 24843) (Fission yeast).